The primary structure comprises 380 residues: Cytochrome b (380 aa).

4 helical membrane passes run 34–54 (FGSL…LLAM), 78–99 (WLIR…YLHI), 114–134 (WNTG…GYVL), and 179–199 (FFAL…IHLT). Residues histidine 84 and histidine 98 each coordinate heme b. Positions 183 and 197 each coordinate heme b. Histidine 202 serves as a coordination point for a ubiquinone. 4 helical membrane-spanning segments follow: residues 227–247 (IKDI…ALFS), 289–309 (LGGV…PFLH), 321–341 (FSQL…WVGS), and 348–368 (FIII…ILFP).

The protein belongs to the cytochrome b family. In terms of assembly, the cytochrome bc1 complex contains 11 subunits: 3 respiratory subunits (MT-CYB, CYC1 and UQCRFS1), 2 core proteins (UQCRC1 and UQCRC2) and 6 low-molecular weight proteins (UQCRH/QCR6, UQCRB/QCR7, UQCRQ/QCR8, UQCR10/QCR9, UQCR11/QCR10 and a cleavage product of UQCRFS1). This cytochrome bc1 complex then forms a dimer. It depends on heme b as a cofactor.

Its subcellular location is the mitochondrion inner membrane. Functionally, component of the ubiquinol-cytochrome c reductase complex (complex III or cytochrome b-c1 complex) that is part of the mitochondrial respiratory chain. The b-c1 complex mediates electron transfer from ubiquinol to cytochrome c. Contributes to the generation of a proton gradient across the mitochondrial membrane that is then used for ATP synthesis. This Numida meleagris (Helmeted guineafowl) protein is Cytochrome b (MT-CYB).